We begin with the raw amino-acid sequence, 248 residues long: PF03932 family protein CutC (248 aa).

Belongs to the CutC family. In terms of assembly, homodimer.

It localises to the cytoplasm. The chain is PF03932 family protein CutC from Salmonella heidelberg (strain SL476).